A 1691-amino-acid polypeptide reads, in one-letter code: Protein TIC 214 (1691 aa).

The next 6 helical transmembrane spans lie at Met19–Leu39, Val60–Leu80, Leu84–Pro104, Leu123–Leu143, Thr158–Phe178, and Phe200–Ala220. The interval Glu819–Lys839 is disordered.

This sequence belongs to the TIC214 family. Part of the Tic complex.

It localises to the plastid. It is found in the chloroplast inner membrane. Its function is as follows. Involved in protein precursor import into chloroplasts. May be part of an intermediate translocation complex acting as a protein-conducting channel at the inner envelope. The protein is Protein TIC 214 of Adiantum capillus-veneris (Maidenhair fern).